The chain runs to 120 residues: Large ribosomal subunit protein bL17 (120 aa).

The protein belongs to the bacterial ribosomal protein bL17 family. Part of the 50S ribosomal subunit. Contacts protein L32.

This Shouchella clausii (strain KSM-K16) (Alkalihalobacillus clausii) protein is Large ribosomal subunit protein bL17.